The primary structure comprises 367 residues: MKTRFPSPFFIFYRRLTVAISLGKILGWGCFGKLLSWIFAATVSFRRKVLSSAPHRVSSTVISVGNIVLGGSGKTPTVLWLAEVLKARGYSCAILSRGYKGKCSGQRKLTIVDPEIHDAAYVGDEPLLMAGKLSKGAVFVHKDRRLAAKEVAKNFDILLLDDGFQNNKLHKDVEIVVVNGQDPLGGGAFFPRGRLRDSPKRLQEADFIIVNGSCGLENQKLLHTWCTSPKIFVEPRISQVLWDSRGEKLPLDSLSGLAAGVFCGLGFPQGFLDMLKRAGVKIVGTYLLPDHAGITKKELHYFSSMTAMRQGEGILCTEKDGIKLGNLIHEPGILPIGKVQMEFDFTHQEDATAALLDKIDRIHNGKR.

68–75 is a binding site for ATP; it reads VLGGSGKT.

It belongs to the LpxK family.

It carries out the reaction a lipid A disaccharide + ATP = a lipid IVA + ADP + H(+). It participates in glycolipid biosynthesis; lipid IV(A) biosynthesis; lipid IV(A) from (3R)-3-hydroxytetradecanoyl-[acyl-carrier-protein] and UDP-N-acetyl-alpha-D-glucosamine: step 6/6. Transfers the gamma-phosphate of ATP to the 4'-position of a tetraacyldisaccharide 1-phosphate intermediate (termed DS-1-P) to form tetraacyldisaccharide 1,4'-bis-phosphate (lipid IVA). The chain is Tetraacyldisaccharide 4'-kinase from Chlamydia abortus (strain DSM 27085 / S26/3) (Chlamydophila abortus).